The sequence spans 173 residues: Crossover junction endodeoxyribonuclease RuvC (173 aa).

Residues aspartate 8, glutamate 67, and aspartate 139 contribute to the active site. Mg(2+) is bound by residues aspartate 8, glutamate 67, and aspartate 139.

Belongs to the RuvC family. In terms of assembly, homodimer which binds Holliday junction (HJ) DNA. The HJ becomes 2-fold symmetrical on binding to RuvC with unstacked arms; it has a different conformation from HJ DNA in complex with RuvA. In the full resolvosome a probable DNA-RuvA(4)-RuvB(12)-RuvC(2) complex forms which resolves the HJ. Mg(2+) is required as a cofactor.

Its subcellular location is the cytoplasm. It catalyses the reaction Endonucleolytic cleavage at a junction such as a reciprocal single-stranded crossover between two homologous DNA duplexes (Holliday junction).. In terms of biological role, the RuvA-RuvB-RuvC complex processes Holliday junction (HJ) DNA during genetic recombination and DNA repair. Endonuclease that resolves HJ intermediates. Cleaves cruciform DNA by making single-stranded nicks across the HJ at symmetrical positions within the homologous arms, yielding a 5'-phosphate and a 3'-hydroxyl group; requires a central core of homology in the junction. The consensus cleavage sequence is 5'-(A/T)TT(C/G)-3'. Cleavage occurs on the 3'-side of the TT dinucleotide at the point of strand exchange. HJ branch migration catalyzed by RuvA-RuvB allows RuvC to scan DNA until it finds its consensus sequence, where it cleaves and resolves the cruciform DNA. This is Crossover junction endodeoxyribonuclease RuvC from Shewanella piezotolerans (strain WP3 / JCM 13877).